Reading from the N-terminus, the 232-residue chain is Ornithine carbamoyltransferase (232 aa).

Carbamoyl phosphate-binding positions include glutamine 15, arginine 39, and histidine 66–glutamine 69. Residues asparagine 99, aspartate 163, and serine 167–methionine 168 each bind L-ornithine. Carbamoyl phosphate-binding positions include histidine 204–proline 207 and threonine 232.

The protein belongs to the aspartate/ornithine carbamoyltransferase superfamily. OTCase family.

It localises to the cytoplasm. It catalyses the reaction carbamoyl phosphate + L-ornithine = L-citrulline + phosphate + H(+). The protein operates within amino-acid biosynthesis; L-arginine biosynthesis; L-arginine from L-ornithine and carbamoyl phosphate: step 1/3. Functionally, reversibly catalyzes the transfer of the carbamoyl group from carbamoyl phosphate (CP) to the N(epsilon) atom of ornithine (ORN) to produce L-citrulline. This is Ornithine carbamoyltransferase (argF) from Neisseria perflava.